A 166-amino-acid polypeptide reads, in one-letter code: MPFERFVQTGRIAKASAGPLKGRLVAIVDVIDQNRVLVDGPLTGVPRQEYRLNNLHLTKYRIKFPYTAPTRIVRKAWTESDLKAQWKVSPWSVKAQNICKRSSLNDFDRFKLRYAKRQRNKLLTIAFNTLKKRTKADGTPRVLKKDRRERLRAEKAKGGKKAAAKK.

Positions 135 to 166 (KADGTPRVLKKDRRERLRAEKAKGGKKAAAKK) are disordered. A compositionally biased stretch (basic and acidic residues) spans 146 to 157 (DRRERLRAEKAK).

It belongs to the eukaryotic ribosomal protein eL14 family.

The polypeptide is Large ribosomal subunit protein eL14 (RpL14) (Drosophila melanogaster (Fruit fly)).